The primary structure comprises 385 residues: Type III polyketide synthase C (385 aa).

56–63 (KLQHLCKS) contributes to the CoA binding site. The Nucleophile role is filled by Cys-165. 217 to 218 (GD) is a binding site for substrate. CoA is bound by residues Leu-267, 307-310 (GGPA), and Ala-310.

The protein belongs to the thiolase-like superfamily. Chalcone/stilbene synthases family. As to quaternary structure, homodimer.

It is found in the endoplasmic reticulum. It participates in secondary metabolite biosynthesis; flavonoid biosynthesis. In terms of biological role, plant type III polyketide synthases (PKSs) that catalyzes the condensation of malonyl-CoA units with various CoA ester starter molecules to generate a diverse array of natural products including long-chain alkyl alpha-pyrones. The chain is Type III polyketide synthase C from Arabidopsis thaliana (Mouse-ear cress).